The sequence spans 325 residues: uncharacterized protein (325 aa).

The active-site Proton donor is Tyr59. A substrate-binding site is contributed by His117.

Belongs to the aldo/keto reductase family.

Its subcellular location is the cytoplasm. The protein resides in the nucleus. This is an uncharacterized protein from Schizosaccharomyces pombe (strain 972 / ATCC 24843) (Fission yeast).